A 152-amino-acid chain; its full sequence is Ubiquitin-activating enzyme E1 Y (152 aa).

Residue C51 is the Glycyl thioester intermediate of the active site.

Belongs to the ubiquitin-activating E1 family. In terms of assembly, monomer.

The catalysed reaction is ATP + ubiquitin + [E1 ubiquitin-activating enzyme]-L-cysteine = AMP + diphosphate + S-ubiquitinyl-[E1 ubiquitin-activating enzyme]-L-cysteine.. It functions in the pathway protein modification; protein ubiquitination. Functionally, activates ubiquitin by first adenylating its C-terminal glycine residue with ATP, and thereafter linking this residue to the side chain of a cysteine residue in E1, yielding a ubiquitin-E1 thioester and free AMP. The Y chromosome form could be involved in the survival and proliferation of differentiating spermatogonia. The chain is Ubiquitin-activating enzyme E1 Y (UBE1Y) from Osphranter rufus (Red kangaroo).